A 260-amino-acid polypeptide reads, in one-letter code: Transmembrane protein 106C (260 aa).

Residue Gly-2 is the site of N-myristoyl glycine attachment. The chain crosses the membrane as a helical span at residues Tyr-85 to Phe-105. N-linked (GlcNAc...) asparagine glycosylation is present at Asn-184. Residues Ser-196–Met-216 traverse the membrane as a helical segment.

The protein belongs to the TMEM106 family. As to quaternary structure, interacts with TMEM106B.

The protein resides in the endoplasmic reticulum membrane. Its subcellular location is the membrane. The protein is Transmembrane protein 106C (Tmem106c) of Mus musculus (Mouse).